We begin with the raw amino-acid sequence, 427 residues long: Adenylosuccinate synthetase (427 aa).

GTP is bound by residues 12-18 (GDEGKGK) and 40-42 (GHT). Aspartate 13 acts as the Proton acceptor in catalysis. Residues aspartate 13 and glycine 40 each contribute to the Mg(2+) site. IMP is bound by residues 13–16 (DEGK), 38–41 (NAGH), threonine 128, arginine 142, glutamine 223, threonine 238, and arginine 302. Residue histidine 41 is the Proton donor of the active site. 298-304 (TTTGRPR) contacts substrate. Residues arginine 304, 330–332 (KLD), and 412–414 (AVG) contribute to the GTP site.

The protein belongs to the adenylosuccinate synthetase family. As to quaternary structure, homodimer. It depends on Mg(2+) as a cofactor.

The protein resides in the cytoplasm. The enzyme catalyses IMP + L-aspartate + GTP = N(6)-(1,2-dicarboxyethyl)-AMP + GDP + phosphate + 2 H(+). It functions in the pathway purine metabolism; AMP biosynthesis via de novo pathway; AMP from IMP: step 1/2. Its function is as follows. Plays an important role in the de novo pathway of purine nucleotide biosynthesis. Catalyzes the first committed step in the biosynthesis of AMP from IMP. This chain is Adenylosuccinate synthetase, found in Heliobacterium modesticaldum (strain ATCC 51547 / Ice1).